The chain runs to 447 residues: Acid phosphatase (447 aa).

Residues 1–17 (MKPSVATLLATVSLVYA) form the signal peptide. 5 N-linked (GlcNAc...) asparagine glycosylation sites follow: N119, N150, N177, N186, and N208. Residue D215 is the Proton donor of the active site. N217, N234, N240, N315, N332, N382, and N405 each carry an N-linked (GlcNAc...) asparagine glycan. The GPI-like-anchor amidated serine moiety is linked to residue S419. Positions 420–447 (ASSNAAVSAVAPAAGVSGLLLGLALNLL) are cleaved as a propeptide — removed in mature form.

In terms of processing, the GPI-like anchor contains a phosphoceramide lipid group. The anchor position has not been determined.

Its subcellular location is the cell membrane. The enzyme catalyses a phosphate monoester + H2O = an alcohol + phosphate. With respect to regulation, inhibited by NaF, molybdate and vanadate. Functionally, has both phosphomonoesterase and phosphodiesterase activity. Cleaves a broad range of phosphate esters. The chain is Acid phosphatase (phoA) from Aspergillus fumigatus (strain ATCC MYA-4609 / CBS 101355 / FGSC A1100 / Af293) (Neosartorya fumigata).